The chain runs to 95 residues: Signal recognition particle 19 kDa protein (95 aa).

Belongs to the SRP19 family. Part of the signal recognition particle protein translocation system, which is composed of SRP and FtsY. Archaeal SRP consists of a 7S RNA molecule of 300 nucleotides and two protein subunits: SRP54 and SRP19.

It is found in the cytoplasm. Involved in targeting and insertion of nascent membrane proteins into the cytoplasmic membrane. Binds directly to 7S RNA and mediates binding of the 54 kDa subunit of the SRP. The polypeptide is Signal recognition particle 19 kDa protein (Staphylothermus marinus (strain ATCC 43588 / DSM 3639 / JCM 9404 / F1)).